Here is a 116-residue protein sequence, read N- to C-terminus: U16-barytoxin-Tl1c (116 aa).

The signal sequence occupies residues 1 to 20; that stretch reads MKTIIVFLSLLVLATKFGDA. The propeptide occupies 21 to 76; it reads NEGVNQEQMKEVIQNEFREDFLNEMAPMSLLQQLEAIESTLLEKEADRNSRQKRCN. Intrachain disulfides connect C75-C90, C82-C95, and C89-C110.

Belongs to the neurotoxin 14 (magi-1) family. 06 (ICK-Trit) subfamily. Expressed by the venom gland.

The protein resides in the secreted. Functionally, ion channel inhibitor. The polypeptide is U16-barytoxin-Tl1c (Trittame loki (Brush-footed trapdoor spider)).